Consider the following 775-residue polypeptide: Melanoma-associated antigen D1 (775 aa).

The tract at residues 37–330 (SEAPPTSQAT…PARQTPSAWQ (294 aa)) is disordered. Residues 39-50 (APPTSQATAAAS) are compositionally biased toward low complexity. 6 stretches are compositionally biased toward polar residues: residues 52–63 (PNASPQSSQPPT), 84–100 (KAQN…SQAR), 150–180 (GQNT…NQPK), 223–237 (AQTS…NVES), 250–260 (NNLNVEENSNG), and 297–330 (LAWQ…SAWQ). 19 tandem repeats follow at residues 293 to 298 (WQTPLA), 299 to 304 (WQNPSG), 305 to 310 (WQNQTA), 329 to 334 (WQNPVA), 335 to 340 (WQNPVI), 341 to 346 (WPNPVI), 347 to 352 (WQNPVI), 353 to 358 (WPNPIV), 359 to 364 (WPGPIV), 365 to 370 (WPNPMA), 371 to 376 (WQSTPG), 377 to 382 (WQSPPS), 383 to 388 (WQAPPS), 389 to 394 (WQSPQD), 395 to 400 (WQGPPD), 401 to 406 (WQLPPD), 407 to 412 (WSMPPD), 413 to 418 (WSFPSD), and 419 to 424 (WPFPPD). Residues 293–441 (WQTPLAWQNP…IPPDWQNLRP (149 aa)) are 22 X 6 AA tandem repeats of W-[PQ]-X-P-X-X. A disordered region spans residues 374–407 (TPGWQSPPSWQAPPSWQSPQDWQGPPDWQLPPDW). The segment covering 375–406 (PGWQSPPSWQAPPSWQSPQDWQGPPDWQLPPD) has biased composition (low complexity). The stretch at 425–429 (WIPAD) is one 20; approximate repeat. 2 tandem repeats follow at residues 430-435 (WPIPPD) and 436-441 (WQNLRP). The span at 437-452 (QNLRPSPNLRSSPNSR) shows a compositional bias: low complexity. The disordered stretch occupies residues 437–463 (QNLRPSPNLRSSPNSRASQNQGPPQPR). An MAGE domain is found at 468–666 (LQERANKLVK…RDWTAQFMEA (199 aa)).

In terms of assembly, interacts with DLX5, DLX7 and MSX2 and forms homomultimers. Interacts with UNC5A. Interacts with TRIM28 and PJA1. Interacts with NGFR/p75NTR and RORA. Ubiquitous and in the seminiferous tubules expressed in Sertoli cells but not in germ cells. Expression decreases in all tissues with increased age and is detectable only in brain cortex and lung.

It is found in the cytoplasm. The protein resides in the cell membrane. It localises to the nucleus. Functionally, involved in the apoptotic response after nerve growth factor (NGF) binding in neuronal cells. Inhibits cell cycle progression, and facilitates NGFR-mediated apoptosis. May act as a regulator of the function of DLX family members. May enhance ubiquitin ligase activity of RING-type zinc finger-containing E3 ubiquitin-protein ligases. Proposed to act through recruitment and/or stabilization of the Ubl-conjugating enzyme (E2) at the E3:substrate complex. Plays a role in the circadian rhythm regulation. May act as RORA co-regulator, modulating the expression of core clock genes such as BMAL1 and NFIL3, induced, or NR1D1, repressed. The protein is Melanoma-associated antigen D1 (Maged1) of Rattus norvegicus (Rat).